A 109-amino-acid chain; its full sequence is Ribonuclease P protein component (109 aa).

This sequence belongs to the RnpA family. Consists of a catalytic RNA component (M1 or rnpB) and a protein subunit.

It catalyses the reaction Endonucleolytic cleavage of RNA, removing 5'-extranucleotides from tRNA precursor.. RNaseP catalyzes the removal of the 5'-leader sequence from pre-tRNA to produce the mature 5'-terminus. It can also cleave other RNA substrates such as 4.5S RNA. The protein component plays an auxiliary but essential role in vivo by binding to the 5'-leader sequence and broadening the substrate specificity of the ribozyme. In Mycoplasma capricolum subsp. capricolum (strain California kid / ATCC 27343 / NCTC 10154), this protein is Ribonuclease P protein component.